Here is a 118-residue protein sequence, read N- to C-terminus: Mediator of RNA polymerase II transcription subunit 11 (118 aa).

It belongs to the Mediator complex subunit 11 family. In terms of assembly, component of the Mediator complex.

The protein localises to the nucleus. In terms of biological role, component of the Mediator complex, a coactivator involved in the regulated transcription of nearly all RNA polymerase II-dependent genes. Mediator functions as a bridge to convey information from gene-specific regulatory proteins to the basal RNA polymerase II transcription machinery. Mediator is recruited to promoters by direct interactions with regulatory proteins and serves as a scaffold for the assembly of a functional pre-initiation complex with RNA polymerase II and the general transcription factors. The chain is Mediator of RNA polymerase II transcription subunit 11 (med11) from Xenopus tropicalis (Western clawed frog).